The following is a 101-amino-acid chain: Putative pterin-4-alpha-carbinolamine dehydratase (101 aa).

The protein belongs to the pterin-4-alpha-carbinolamine dehydratase family.

The enzyme catalyses (4aS,6R)-4a-hydroxy-L-erythro-5,6,7,8-tetrahydrobiopterin = (6R)-L-erythro-6,7-dihydrobiopterin + H2O. This chain is Putative pterin-4-alpha-carbinolamine dehydratase, found in Rhizobium leguminosarum bv. trifolii (strain WSM2304).